A 230-amino-acid chain; its full sequence is Modulator of macroautophagy TMEM150B (230 aa).

Position 1 (Met-1) is a topological domain, cytoplasmic. Residues 2-22 (WAWALLPICLTIWATAGIWIV) form a helical membrane-spanning segment. Residues 23–50 (YGMSVSNGSVNLTDGFPFISLCGTYPPQ) are Extracellular-facing. Residues Asn-29 and Asn-33 are each glycosylated (N-linked (GlcNAc...) asparagine). Residues 51-71 (SCVFGQVLNVGAMLGVWISVI) form a helical membrane-spanning segment. Over 72–83 (RFQQIRDYGCHS) the chain is Cytoplasmic. A helical membrane pass occupies residues 84-104 (VLNSVSLAMGLLCALGTSIVG). Residues 105 to 115 (NFQQSNQLETH) are Extracellular-facing. The chain crosses the membrane as a helical span at residues 116 to 136 (LAGAFLAFVIGNIYFWMQTVL). At 137 to 150 (TYMVKPKHGGCYIG) the chain is on the cytoplasmic side. The chain crosses the membrane as a helical span at residues 151–171 (PIRFCLSVACTALIVLMAVFL). At 172–183 (KLNMKSISAICE) the chain is on the extracellular side. Residues 184–204 (WIVAMILFLLYGLFSVDFWHL) form a helical membrane-spanning segment. The Cytoplasmic segment spans residues 205–230 (DGHYFHVKKRTAIPNEVEVSTVTLNI).

Belongs to the DRAM/TMEM150 family.

The protein localises to the cell membrane. The protein resides in the endosome membrane. Its subcellular location is the cytoplasmic vesicle. It is found in the autophagosome membrane. Modulator of macroautophagy that causes accumulation of autophagosomes under basal conditions and enhances autophagic flux. Represses cell death and promotes long-term clonogenic survival of cells grown in the absence of glucose in a macroautophagy-independent manner. May have some role in extracellular matrix engulfment or growth factor receptor recycling, both of which can modulate cell survival. The polypeptide is Modulator of macroautophagy TMEM150B (Xenopus tropicalis (Western clawed frog)).